Reading from the N-terminus, the 598-residue chain is DNA mismatch repair protein MutL (598 aa).

This sequence belongs to the DNA mismatch repair MutL/HexB family.

This protein is involved in the repair of mismatches in DNA. It is required for dam-dependent methyl-directed DNA mismatch repair. May act as a 'molecular matchmaker', a protein that promotes the formation of a stable complex between two or more DNA-binding proteins in an ATP-dependent manner without itself being part of a final effector complex. The sequence is that of DNA mismatch repair protein MutL from Geotalea daltonii (strain DSM 22248 / JCM 15807 / FRC-32) (Geobacter daltonii).